The following is a 287-amino-acid chain: Cell wall-binding protein YocH (287 aa).

The N-terminal stretch at 1 to 25 (MKKTIMSFVAVAALSTTAFGAHASA) is a signal peptide. 2 consecutive LysM domains span residues 26–69 (KEIT…KLTI) and 78–121 (GQYT…TLSV). The segment covering 130-143 (TATENAQTNAPQAA) has biased composition (low complexity). The tract at residues 130 to 193 (TATENAQTNA…SNTNNQEASK (64 aa)) is disordered. Positions 165-181 (QETKAEAETSVNTEEKA) are enriched in basic and acidic residues. Over residues 182 to 193 (VQSNTNNQEASK) the composition is skewed to polar residues.

It localises to the secreted. The protein localises to the cell wall. This is Cell wall-binding protein YocH (yocH) from Bacillus subtilis (strain 168).